A 131-amino-acid chain; its full sequence is D-ribose pyranase (131 aa).

Histidine 20 (proton donor) is an active-site residue. Residues aspartate 28, histidine 98, and tyrosine 120–asparagine 122 each bind substrate.

It belongs to the RbsD / FucU family. RbsD subfamily. Homodecamer.

It localises to the cytoplasm. The catalysed reaction is beta-D-ribopyranose = beta-D-ribofuranose. It functions in the pathway carbohydrate metabolism; D-ribose degradation; D-ribose 5-phosphate from beta-D-ribopyranose: step 1/2. Its function is as follows. Catalyzes the interconversion of beta-pyran and beta-furan forms of D-ribose. The sequence is that of D-ribose pyranase from Clostridium botulinum (strain Eklund 17B / Type B).